Here is a 452-residue protein sequence, read N- to C-terminus: Scaffold protein ILK (452 aa).

ANK repeat units follow at residues 2-30 (DDIF…LNQG), 31-63 (DDHG…INVM), 64-96 (NRGD…INAV), 97-129 (NEHG…VSIA), and 130-174 (NKYS…GTTR). Positions 193–446 (LSLSQKLNEN…PKFDMIVPIL (254 aa)) constitute a Protein kinase domain. ATP is bound by residues asparagine 200, asparagine 202, serine 204, histidine 270, methionine 272, and asparagine 279. Position 339 (aspartate 339) interacts with Mg(2+). Lysine 341 provides a ligand contact to ATP. The short motif at 363 to 371 (KKPEEINRR) is the Nuclear localization signal element.

It belongs to the protein kinase superfamily. TKL Ser/Thr protein kinase family. In terms of assembly, interacts with PXN/PAXILLIN (via LD motif 4).

The protein resides in the cell junction. The protein localises to the focal adhesion. Its subcellular location is the cell membrane. It localises to the cell projection. It is found in the lamellipodium. The protein resides in the cytoplasm. The protein localises to the myofibril. Its subcellular location is the sarcomere. It localises to the nucleus. It is found in the cytoskeleton. The protein resides in the microtubule organizing center. The protein localises to the centrosome. Its subcellular location is the cell cortex. Scaffold protein which mediates protein-protein interactions during a range of cellular events including focal adhesion assembly, cell adhesion and cell migration. This Gallus gallus (Chicken) protein is Scaffold protein ILK.